Consider the following 126-residue polypeptide: Holo-[acyl-carrier-protein] synthase (126 aa).

Mg(2+)-binding residues include Asp-9 and Glu-58.

The protein belongs to the P-Pant transferase superfamily. AcpS family. Requires Mg(2+) as cofactor.

It is found in the cytoplasm. It catalyses the reaction apo-[ACP] + CoA = holo-[ACP] + adenosine 3',5'-bisphosphate + H(+). Its function is as follows. Transfers the 4'-phosphopantetheine moiety from coenzyme A to a Ser of acyl-carrier-protein. The protein is Holo-[acyl-carrier-protein] synthase of Escherichia coli (strain ATCC 8739 / DSM 1576 / NBRC 3972 / NCIMB 8545 / WDCM 00012 / Crooks).